Here is a 522-residue protein sequence, read N- to C-terminus: Response regulator mcs4 (522 aa).

Residues 148–274 (DSLESPVSAP…RSISHSSLYT (127 aa)) form a disordered region. Positions 174–194 (NLRNASRTRSHQTLPSSNVNK) are enriched in polar residues. A compositionally biased stretch (basic and acidic residues) spans 244 to 255 (RSDESTAEKLAK). Residues 260–274 (TPTNSRSISHSSLYT) are compositionally biased toward polar residues. The 143-residue stretch at 363–505 (NVLIVEDNII…WLEKKITEWG (143 aa)) folds into the Response regulatory domain. At aspartate 412 the chain carries 4-aspartylphosphate.

Its subcellular location is the cytoplasm. Its function is as follows. Response regulator that coordinately controls the stress activated wak1-wis1-sty1 MAP kinase pathway and fission yeast cell cycle. This chain is Response regulator mcs4 (mcs4), found in Schizosaccharomyces pombe (strain 972 / ATCC 24843) (Fission yeast).